We begin with the raw amino-acid sequence, 613 residues long: Probable Xaa-Pro aminopeptidase P (613 aa).

Mn(2+) is bound by residues aspartate 408, aspartate 419, glutamate 517, and glutamate 531.

This sequence belongs to the peptidase M24B family. Requires Mn(2+) as cofactor.

The enzyme catalyses Release of any N-terminal amino acid, including proline, that is linked to proline, even from a dipeptide or tripeptide.. Its function is as follows. Catalyzes the removal of a penultimate prolyl residue from the N-termini of peptides. This Penicillium rubens (strain ATCC 28089 / DSM 1075 / NRRL 1951 / Wisconsin 54-1255) (Penicillium chrysogenum) protein is Probable Xaa-Pro aminopeptidase P (ampp).